The chain runs to 666 residues: Amyloid beta A4 precursor protein-binding family B member 1-interacting protein (666 aa).

Serine 55 carries the phosphoserine modification. Residues serine 122 to glutamate 155 form a disordered region. Over residues proline 129–proline 148 the composition is skewed to pro residues. A Ras-associating domain is found at lysine 176–lysine 263. A PH domain is found at valine 310–tyrosine 419. Residues alanine 448–serine 666 form a disordered region. A compositionally biased stretch (polar residues) spans glutamine 453 to alanine 478. Residues alanine 483–alanine 504 show a composition bias toward basic and acidic residues. Serine 526 is modified (phosphoserine). Threonine 528 carries the phosphothreonine modification. Serine 531 carries the post-translational modification Phosphoserine. 2 stretches are compositionally biased toward pro residues: residues proline 547–serine 589 and leucine 598–proline 631.

It belongs to the MRL family. Interacts, through the N-terminal Pro-rich region, with the WW domain of APBB1. Interacts with RAP1A, PFN1, TLN1, VASP, VCL and ENAH. Widely expressed with high expression in thymus, spleen, lymph node, bone marrow and peripheral leukocytes.

The protein resides in the cell membrane. Its subcellular location is the cell projection. The protein localises to the lamellipodium. It is found in the cell junction. It localises to the focal adhesion. The protein resides in the cytoplasm. Its subcellular location is the cytoskeleton. Its function is as follows. Appears to function in the signal transduction from Ras activation to actin cytoskeletal remodeling. Suppresses insulin-induced promoter activities through AP1 and SRE. Mediates Rap1-induced adhesion. The polypeptide is Amyloid beta A4 precursor protein-binding family B member 1-interacting protein (APBB1IP) (Homo sapiens (Human)).